We begin with the raw amino-acid sequence, 1443 residues long: Sterol 3-beta-glucosyltransferase ATG26 (1443 aa).

Low complexity predominate over residues 1 to 13 (MATQADDAAASQA). 2 disordered regions span residues 1–69 (MATQ…MFMN) and 88–187 (NDRF…LTLT). Basic and acidic residues predominate over residues 18 to 32 (GDLKEHVHDELDKIQ). Acidic residues predominate over residues 49-58 (DSEDSDDEDN). Polar residues predominate over residues 104–117 (QNTRTESIARTSIL). Positions 125–134 (DKVHRRRKLS) are enriched in basic residues. A compositionally biased stretch (acidic residues) spans 164–173 (EVADEADDEH). In terms of domain architecture, GRAM 1 spans 240-284 (LKEIFEFDEYEQVIEEYPCWLLQSVLLQGYMYITSKHICFYAYLP). The region spanning 289–385 (EAVKSGYLSK…WVKSLQRVIF (97 aa)) is the PH domain. The tract at residues 463-657 (EQVITGDDHD…HGDRHHGIPH (195 aa)) is disordered. Over residues 506-525 (LAPMSPLSPRSPSQLSPRAS) the composition is skewed to low complexity. Polar residues predominate over residues 585 to 614 (SFLQSSIENPSISTLSPSSYDEPSASQILQ). The span at 631 to 642 (SRKRDRSGKRTP) shows a compositional bias: basic residues. The region spanning 765 to 870 (RFRAHFALPE…DCAVTLHQLM (106 aa)) is the GRAM 2 domain. Residues 883 to 910 (DQEEQDDEEAAAAMAERDELQEARQDEF) adopt a coiled-coil conformation. Positions 957, 958, 960, 1265, 1267, 1280, 1283, 1284, 1285, 1304, and 1305 each coordinate UDP-alpha-D-glucose. The tract at residues 1385 to 1443 (NAEHGLAEDDDDTEESWTFVGRDEPDPDAVTKKLSDGLAGLGAAGDRPPPLGSQAPTVA) is disordered. A compositionally biased stretch (basic and acidic residues) spans 1405–1419 (GRDEPDPDAVTKKLS).

This sequence belongs to the glycosyltransferase 28 family.

It localises to the cytoplasm. Its subcellular location is the preautophagosomal structure membrane. It catalyses the reaction a sterol + UDP-alpha-D-glucose = a sterol 3-beta-D-glucoside + UDP + H(+). The enzyme catalyses ergosterol + UDP-alpha-D-glucose = ergosteryl 3-beta-D-glucoside + UDP + H(+). Sterol glycosyltransferase responsible for the glycosylation of ergosterol to form ergosterol-glucoside. The chain is Sterol 3-beta-glucosyltransferase ATG26 from Gibberella zeae (strain ATCC MYA-4620 / CBS 123657 / FGSC 9075 / NRRL 31084 / PH-1) (Wheat head blight fungus).